A 316-amino-acid chain; its full sequence is Arginase-1 (316 aa).

A disordered region spans residues 1-26; it reads MAKERHSVGVIGAPFSKGQPRRGVEE. Positions 101, 124, 126, and 128 each coordinate Mn(2+). Residues 126–130, 137–139, and D183 contribute to the substrate site; these read HADIN and CGN. D232 and D234 together coordinate Mn(2+). T246 serves as a coordination point for substrate.

This sequence belongs to the arginase family. As to quaternary structure, homotrimer. Mn(2+) serves as cofactor. As to expression, strongest expression in liver.

The enzyme catalyses L-arginine + H2O = urea + L-ornithine. The protein operates within nitrogen metabolism; urea cycle; L-ornithine and urea from L-arginine: step 1/1. This chain is Arginase-1 (arg1), found in Xenopus laevis (African clawed frog).